A 375-amino-acid polypeptide reads, in one-letter code: Queuine tRNA-ribosyltransferase (375 aa).

Residue D90 is the Proton acceptor of the active site. Substrate-binding positions include 90–94 (DSGGF), D144, Q193, and G220. Residues 251–257 (GVGTPED) form an RNA binding region. Catalysis depends on D270, which acts as the Nucleophile. Positions 275–279 (TRNAR) are RNA binding; important for wobble base 34 recognition. 4 residues coordinate Zn(2+): C308, C310, C313, and H339.

It belongs to the queuine tRNA-ribosyltransferase family. In terms of assembly, homodimer. Within each dimer, one monomer is responsible for RNA recognition and catalysis, while the other monomer binds to the replacement base PreQ1. Zn(2+) serves as cofactor.

The catalysed reaction is 7-aminomethyl-7-carbaguanine + guanosine(34) in tRNA = 7-aminomethyl-7-carbaguanosine(34) in tRNA + guanine. It participates in tRNA modification; tRNA-queuosine biosynthesis. Functionally, catalyzes the base-exchange of a guanine (G) residue with the queuine precursor 7-aminomethyl-7-deazaguanine (PreQ1) at position 34 (anticodon wobble position) in tRNAs with GU(N) anticodons (tRNA-Asp, -Asn, -His and -Tyr). Catalysis occurs through a double-displacement mechanism. The nucleophile active site attacks the C1' of nucleotide 34 to detach the guanine base from the RNA, forming a covalent enzyme-RNA intermediate. The proton acceptor active site deprotonates the incoming PreQ1, allowing a nucleophilic attack on the C1' of the ribose to form the product. After dissociation, two additional enzymatic reactions on the tRNA convert PreQ1 to queuine (Q), resulting in the hypermodified nucleoside queuosine (7-(((4,5-cis-dihydroxy-2-cyclopenten-1-yl)amino)methyl)-7-deazaguanosine). This chain is Queuine tRNA-ribosyltransferase, found in Herminiimonas arsenicoxydans.